The chain runs to 102 residues: Acylphosphatase 1 (102 aa).

The region spanning 12-100 is the Acylphosphatase-like domain; that stretch reads TRLVRVRGRV…PRFDRFEQLP (89 aa). Catalysis depends on residues R27 and N45.

It belongs to the acylphosphatase family.

It carries out the reaction an acyl phosphate + H2O = a carboxylate + phosphate + H(+). The chain is Acylphosphatase 1 (acyP1) from Ralstonia nicotianae (strain ATCC BAA-1114 / GMI1000) (Ralstonia solanacearum).